Consider the following 91-residue polypeptide: Small ribosomal subunit protein uS15 (91 aa).

This sequence belongs to the universal ribosomal protein uS15 family. In terms of assembly, part of the 30S ribosomal subunit. Forms a bridge to the 50S subunit in the 70S ribosome, contacting the 23S rRNA.

Functionally, one of the primary rRNA binding proteins, it binds directly to 16S rRNA where it helps nucleate assembly of the platform of the 30S subunit by binding and bridging several RNA helices of the 16S rRNA. Forms an intersubunit bridge (bridge B4) with the 23S rRNA of the 50S subunit in the ribosome. In Amoebophilus asiaticus (strain 5a2), this protein is Small ribosomal subunit protein uS15.